The following is a 494-amino-acid chain: Neuronal acetylcholine receptor subunit alpha-6 (494 aa).

The first 30 residues, 1–30 (MLNSRDQGNLHSGLCLWLCGFLALFKGSTG), serve as a signal peptide directing secretion. The Extracellular segment spans residues 31-240 (CESEEQLFHR…TYSFYIRRLP (210 aa)). Asparagine 54 and asparagine 171 each carry an N-linked (GlcNAc...) asparagine glycan. Intrachain disulfides connect cysteine 158–cysteine 172 and cysteine 222–cysteine 223. 3 helical membrane passes run 241 to 265 (MFYT…FYLP), 272 to 290 (VTLC…LVIT), and 306 to 327 (YLLF…VLNI). At 328-465 (HYRTPATHTM…WKYMAMVVDR (138 aa)) the chain is on the cytoplasmic side. Positions 399-423 (QKSSDIAPGKRRSSQQPARWVAENS) are disordered. Serine 401 is modified (phosphoserine). The chain crosses the membrane as a helical span at residues 466–485 (VFLWVFIIVCVFGTVGLFLQ).

It belongs to the ligand-gated ion channel (TC 1.A.9) family. Acetylcholine receptor (TC 1.A.9.1) subfamily. Alpha-6/CHRNA6 sub-subfamily. In terms of assembly, neuronal AChR is composed of two different types of subunits: alpha and non-alpha (beta). CHRNA6/alpha-6 subunit can be combined to CHRNB2/beta-2 and CHRNA4/alpha-4 to give rise to functional receptors. Interacts with LYPD6. In terms of tissue distribution, predominantly expressed in only a few brain areas, including dopaminergic neurons, norepirephrine neurons and cells of the visual system.

Its subcellular location is the synaptic cell membrane. The catalysed reaction is K(+)(in) = K(+)(out). It carries out the reaction Na(+)(in) = Na(+)(out). The enzyme catalyses Ca(2+)(in) = Ca(2+)(out). Its activity is regulated as follows. Activated by a myriad of ligands such as acetylcholine, cytisine and nicotine. CHRNA6 nAChR activity is inhibited by the antagonists alpha-conotoxin MII and PIA, a small disulfide-constrained peptides from cone snails. Component of neuronal acetylcholine receptors (nAChRs) that function as pentameric, ligand-gated cation channels with high calcium permeability among other activities. nAChRs are excitatory neurotrasnmitter receptors formed by a collection of nAChR subunits known to mediate synaptic transmission in the nervous system and the neuromuscular junction. Each nAchR subunit confers differential attributes to channel properties, including activation, deactivation and desensitization kinetics, pH sensitivity, cation permeability, and binding to allosteric modulators. CHRNA6 forms pentameric channels with CHRNB2 and CHRNA4 that exhibit high sensitivity to ACh and nicotine and are predominantly expressed in only a few brain areas, including dopaminergic neurons, norepirephrine neurons and cells of the visual system. nAChrs containing CHRNA6 subunits mediate endogenous cholinergic modulation of dopamine and gamma-aminobutyric acid (GABA) release in response to nicotine at nerve terminals. The polypeptide is Neuronal acetylcholine receptor subunit alpha-6 (Chrna6) (Mus musculus (Mouse)).